Here is a 394-residue protein sequence, read N- to C-terminus: Elongation factor Tu (394 aa).

The tr-type G domain maps to 10–204 (KPHVNIGTIG…AVDSYIPQPV (195 aa)). Positions 19–26 (GHVDHGKT) are G1. 19–26 (GHVDHGKT) serves as a coordination point for GTP. Thr-26 lines the Mg(2+) pocket. Positions 60-64 (GITIS) are G2. Positions 81–84 (DCPG) are G3. GTP is bound by residues 81–85 (DCPGH) and 136–139 (NKVD). The interval 136-139 (NKVD) is G4. Positions 174–176 (SAL) are G5.

It belongs to the TRAFAC class translation factor GTPase superfamily. Classic translation factor GTPase family. EF-Tu/EF-1A subfamily. Monomer.

The protein localises to the cytoplasm. It catalyses the reaction GTP + H2O = GDP + phosphate + H(+). Its function is as follows. GTP hydrolase that promotes the GTP-dependent binding of aminoacyl-tRNA to the A-site of ribosomes during protein biosynthesis. This is Elongation factor Tu from Rickettsia rhipicephali.